The chain runs to 404 residues: Phosphopentomutase (404 aa).

Mn(2+) contacts are provided by aspartate 10, aspartate 303, histidine 308, aspartate 344, histidine 345, and histidine 356.

It belongs to the phosphopentomutase family. Mn(2+) serves as cofactor.

The protein resides in the cytoplasm. The catalysed reaction is 2-deoxy-alpha-D-ribose 1-phosphate = 2-deoxy-D-ribose 5-phosphate. It catalyses the reaction alpha-D-ribose 1-phosphate = D-ribose 5-phosphate. The protein operates within carbohydrate degradation; 2-deoxy-D-ribose 1-phosphate degradation; D-glyceraldehyde 3-phosphate and acetaldehyde from 2-deoxy-alpha-D-ribose 1-phosphate: step 1/2. Its function is as follows. Isomerase that catalyzes the conversion of deoxy-ribose 1-phosphate (dRib-1-P) and ribose 1-phosphate (Rib-1-P) to deoxy-ribose 5-phosphate (dRib-5-P) and ribose 5-phosphate (Rib-5-P), respectively. This chain is Phosphopentomutase, found in Shewanella baltica (strain OS223).